The chain runs to 439 residues: GTPase Der (439 aa).

EngA-type G domains are found at residues 3–167 (PLVA…PKSS) and 176–351 (TRIA…AQYS). GTP-binding positions include 9-16 (GRPNVGKS), 56-60 (DTGGF), 119-122 (NKVD), 182-189 (GRPNVGKS), 229-233 (DTAGI), and 294-297 (NKWD). One can recognise a KH-like domain in the interval 352-436 (KRVSTSDLNR…PLKIIFRGRD (85 aa)).

It belongs to the TRAFAC class TrmE-Era-EngA-EngB-Septin-like GTPase superfamily. EngA (Der) GTPase family. In terms of assembly, associates with the 50S ribosomal subunit.

GTPase that plays an essential role in the late steps of ribosome biogenesis. The polypeptide is GTPase Der (Geobacter metallireducens (strain ATCC 53774 / DSM 7210 / GS-15)).